Consider the following 327-residue polypeptide: Sideroflexin FSF1 (327 aa).

The residue at position 2 (alanine 2) is an N-acetylalanine. 4 helical membrane-spanning segments follow: residues 98–118 (NLVV…TVFW), 143–163 (SQLL…ALGL), 179–199 (LILG…VNVF), and 272–292 (ANLG…LGIF).

It belongs to the sideroflexin family.

The protein resides in the mitochondrion membrane. In terms of biological role, mitochondrial amino-acid transporter that mediates transport of serine into mitochondria. In Saccharomyces cerevisiae (strain ATCC 204508 / S288c) (Baker's yeast), this protein is Sideroflexin FSF1.